A 131-amino-acid polypeptide reads, in one-letter code: Small ribosomal subunit protein uS11 (131 aa).

This sequence belongs to the universal ribosomal protein uS11 family. As to quaternary structure, part of the 30S ribosomal subunit. Interacts with proteins S7 and S18. Binds to IF-3.

Functionally, located on the platform of the 30S subunit, it bridges several disparate RNA helices of the 16S rRNA. Forms part of the Shine-Dalgarno cleft in the 70S ribosome. The protein is Small ribosomal subunit protein uS11 of Cellvibrio japonicus (strain Ueda107) (Pseudomonas fluorescens subsp. cellulosa).